Here is a 734-residue protein sequence, read N- to C-terminus: MLLQNLALKKGKEAAGHNIQSLTKHGNYFVQSSDRRRAYTSNQSAADKVREELAKETCEKLSSQHQAKKKAKAIDRDFFLSVLGSSATKREARSYIQNFKPLNTSPAKPISQEPVHKNTNENGANLGSIYTATRAVAESPKFVQQPAVSQSTLGGSILHVALVKVRAPQLLDDETLNGIGKTLSKLCRLGLISTVVVDCEDGTDTHLKVSECEWRNRIKEQAARVVTAIDASGTEARLVDNVIGIAEDGSDVKQQPYLKGGVHVTFRELLMTPLRRGVLPVLPSIGHTDATQTAVSITASDVVLALTREFAGFRSPQSPDEHPNVVKEHLQALQNEVSLDRLILIDPLGGIPASDRRNGYHVFLNMEQEYEQAKQDLIKTGGLYSETSSRSTRAEADSNFNLRDDIPLSSFTEQKSGELEYSPRHQNDSPTQQDQRMKFHLDNLELVRSALAILPPSSSALVTTPDEAANSGKQHEFKAAGVGTRRQRNPLIHNLLTDKPAFSSSLPAGRLGPLDKNEPITPSTKLAPATFAKHGMPVTIFPDPKTTPWQPPIAGVPQISLTDPQIDLPRLVHLIEDSFNKKLDVQDYLRRVNNRIAGVIIAGEYEGGALLTWELPPGVPDDGSEESRKRMVPYLDKFAVLKRSQGSGGVADVVFKSMVRDCFPGGVCWRSRKDNPVNKWYFERSRATLKLMDTNWTMFFTTPEENMDQQTFQDYEAVCKTIEPSWADKQGVQD.

Residues 384–433 (YSETSSRSTRAEADSNFNLRDDIPLSSFTEQKSGELEYSPRHQNDSPTQQ) form a disordered region. Composition is skewed to basic and acidic residues over residues 392-406 (TRAE…RDDI) and 415-427 (KSGE…RHQN). In terms of domain architecture, N-acetyltransferase spans 555 to 724 (GVPQISLTDP…YEAVCKTIEP (170 aa)).

This sequence belongs to the acetyltransferase family.

It localises to the mitochondrion. The catalysed reaction is L-glutamate + acetyl-CoA = N-acetyl-L-glutamate + CoA + H(+). It functions in the pathway amino-acid biosynthesis; L-arginine biosynthesis; N(2)-acetyl-L-ornithine from L-glutamate: step 1/4. Its function is as follows. N-acetylglutamate synthase involved in arginine biosynthesis. The protein is Amino-acid acetyltransferase, mitochondrial (arg2) of Botryotinia fuckeliana (strain B05.10) (Noble rot fungus).